An 800-amino-acid polypeptide reads, in one-letter code: Putative antiporter subunit mnhA2 (800 aa).

21 helical membrane-spanning segments follow: residues 3 to 23, 29 to 49, 78 to 98, 109 to 129, 133 to 153, 167 to 187, 202 to 222, 249 to 269, 273 to 293, 300 to 320, 337 to 357, 387 to 407, 428 to 448, 472 to 492, 527 to 547, 596 to 616, 627 to 647, 651 to 671, 676 to 696, 712 to 732, and 768 to 788; these read LVYLLGGLIVIMLIVLMTLFI, FAGYIALLAPILASGYFLAQI, GLGLMFGLIISIIGVAVFFYA, LPRFFLYLLLFMFSMLGIVVS, ILMYVFWELTSVSSFLLISYW, FIITVLGGLALLTGFIMLYII, SISEHALFIPMMIMLLIGAFT, SATMVKAGIFLLFKFTPILGL, YIYIVTFVGLITMIFGSVTAL, GILAYSTISQLGMIMSMVGLG, LILFAGLFHLMNHAIFKCALF, LVMTLAALSMAGVPLLNGFLS, LTIIVVAIGVIASIFTFVYAV, PWLFSLPAIILMVMIPIIFFI, GVNLPLIFSVIVIIVGLILAL, IITVLIFSILIAYGIFQVGLP, GPLEVILGIMISVVGIALVFI, LTMVILNGIIGYSVALFFLLM, LALTQLVVETITTILFIVSFS, TIKIIVSFIMAGAVVTLIFIA, and LDTMFEGIVLIIAGLGIYTLL.

This sequence belongs to the CPA3 antiporters (TC 2.A.63) subunit A family. May form a heterooligomeric complex that consists of seven subunits: mnhA2, mnhB2, mnhC2, mnhD2, mnhE2, mnhF2 and mnhG2.

It is found in the cell membrane. In Staphylococcus haemolyticus (strain JCSC1435), this protein is Putative antiporter subunit mnhA2 (mnhA2).